The following is a 92-amino-acid chain: Beta-2-microglobulin (92 aa).

Positions 2-91 constitute an Ig-like C1-type domain; the sequence is PQIQVYTRHP…VSLNEPKTVI (90 aa). Cysteines 22 and 77 form a disulfide.

The protein belongs to the beta-2-microglobulin family. Heterodimer of an alpha chain and a beta chain. Beta-2-microglobulin is the beta-chain of major histocompatibility complex class I molecules.

It localises to the secreted. Functionally, component of the class I major histocompatibility complex (MHC). Involved in the presentation of peptide antigens to the immune system. This chain is Beta-2-microglobulin (B2m), found in Mus cervicolor (Fawn-colored mouse).